The following is a 434-amino-acid chain: Methylenetetrahydrofolate--tRNA-(uracil-5-)-methyltransferase TrmFO (434 aa).

10-15 (GAGLAG) contributes to the FAD binding site.

It belongs to the MnmG family. TrmFO subfamily. Requires FAD as cofactor.

It localises to the cytoplasm. It catalyses the reaction uridine(54) in tRNA + (6R)-5,10-methylene-5,6,7,8-tetrahydrofolate + NADH + H(+) = 5-methyluridine(54) in tRNA + (6S)-5,6,7,8-tetrahydrofolate + NAD(+). It carries out the reaction uridine(54) in tRNA + (6R)-5,10-methylene-5,6,7,8-tetrahydrofolate + NADPH + H(+) = 5-methyluridine(54) in tRNA + (6S)-5,6,7,8-tetrahydrofolate + NADP(+). Functionally, catalyzes the folate-dependent formation of 5-methyl-uridine at position 54 (M-5-U54) in all tRNAs. This chain is Methylenetetrahydrofolate--tRNA-(uracil-5-)-methyltransferase TrmFO, found in Bacillus cytotoxicus (strain DSM 22905 / CIP 110041 / 391-98 / NVH 391-98).